The following is a 66-amino-acid chain: Large ribosomal subunit protein bL33c (66 aa).

Belongs to the bacterial ribosomal protein bL33 family.

It localises to the plastid. Its subcellular location is the chloroplast. The polypeptide is Large ribosomal subunit protein bL33c (Populus alba (White poplar)).